The sequence spans 347 residues: DNA-directed RNA polymerase subunit alpha (347 aa).

The alpha N-terminal domain (alpha-NTD) stretch occupies residues 1 to 226 (MLISQRPTLS…ELFGLARELN (226 aa)). An alpha C-terminal domain (alpha-CTD) region spans residues 241–347 (ADHIASFALP…DQDYAETEQL (107 aa)).

Belongs to the RNA polymerase alpha chain family. As to quaternary structure, homodimer. The RNAP catalytic core consists of 2 alpha, 1 beta, 1 beta' and 1 omega subunit. When a sigma factor is associated with the core the holoenzyme is formed, which can initiate transcription.

The enzyme catalyses RNA(n) + a ribonucleoside 5'-triphosphate = RNA(n+1) + diphosphate. Its function is as follows. DNA-dependent RNA polymerase catalyzes the transcription of DNA into RNA using the four ribonucleoside triphosphates as substrates. This chain is DNA-directed RNA polymerase subunit alpha, found in Mycobacterium avium (strain 104).